A 968-amino-acid chain; its full sequence is RNA polymerase-associated protein RapA (968 aa).

Residues 164-334 (DVGRRHAPRV…FARLRLLDPN (171 aa)) form the Helicase ATP-binding domain. Position 177 to 184 (177 to 184 (DEVGLGKT)) interacts with ATP. Positions 280–283 (DEAH) match the DEAH box motif. The Helicase C-terminal domain maps to 490–662 (RVEWLMGYLT…YLASPDQTEG (173 aa)).

This sequence belongs to the SNF2/RAD54 helicase family. RapA subfamily. In terms of assembly, interacts with the RNAP. Has a higher affinity for the core RNAP than for the holoenzyme. Its ATPase activity is stimulated by binding to RNAP.

In terms of biological role, transcription regulator that activates transcription by stimulating RNA polymerase (RNAP) recycling in case of stress conditions such as supercoiled DNA or high salt concentrations. Probably acts by releasing the RNAP, when it is trapped or immobilized on tightly supercoiled DNA. Does not activate transcription on linear DNA. Probably not involved in DNA repair. The chain is RNA polymerase-associated protein RapA from Escherichia coli (strain 55989 / EAEC).